Reading from the N-terminus, the 749-residue chain is Transcription factor RFX3 (749 aa).

Positions 183-258 (HLQWLLDNYE…YHYYGIRVKP (76 aa)) form a DNA-binding region, RFX-type winged-helix. A disordered region spans residues 663 to 699 (VSPGNLDKDEGSEVESEMDEELDDSSEPQAKREKTEL). Residues 674-688 (SEVESEMDEELDDSS) are compositionally biased toward acidic residues.

The protein belongs to the RFX family. In terms of assembly, heterodimer; heterodimerizes with RFX1 and RFX2, and RFX6.

The protein localises to the nucleus. Transcription factor required for ciliogenesis and islet cell differentiation during endocrine pancreas development. Essential for the differentiation of nodal monocilia and left-right asymmetry specification during embryogenesis. Required for the biogenesis of motile cilia by governing growth and beating efficiency of motile cells. Also required for ciliated ependymal cell differentiation. Regulates the expression of genes involved in ciliary assembly (DYNC2LI1, FOXJ1 and BBS4) and genes involved in ciliary motility (DNAH11, DNAH9 and DNAH5). Together with RFX6, participates in the differentiation of 4 of the 5 islet cell types during endocrine pancreas development, with the exception of pancreatic PP (polypeptide-producing) cells. Regulates transcription by forming a heterodimer with another RFX protein and binding to the X-box in the promoter of target genes. Represses transcription of MAP1A in non-neuronal cells but not in neuronal cells. In Macaca fascicularis (Crab-eating macaque), this protein is Transcription factor RFX3 (RFX3).